Reading from the N-terminus, the 90-residue chain is MKADYKKINSILTYTSTALKNPKIIKDKDLVVLLTIIQEEAKQNRIFYDYKRKFRPAVTRFTIDNNFEIPDCLVKLLSAVETPKAWSGFS.

Functionally, imparts immunity to sakacin-A to naturally sensitive host strains. The protein is Sakacin-A immunity factor (saiA) of Latilactobacillus sakei (Lactobacillus sakei).